The primary structure comprises 748 residues: MSFIDPYQHIIVEHQYSHKFTVVVLRATKVTKGAFGDMLDTPDPYVELFIATTPDSRKRTRHFNNDINPVWNEAFEFILDPNQGNVLEITLMDANYVMDETLGTATFPVSSMKVGEKKEVPFIFNQVTEMILEMSLEVCSSPDLRFSMALCDQEKAFRQQRKENIKENMRKLLGPKKSEGLYSTRDVPVVAILGSGGGFRAMVGFSGVMKALYESGILDCATYIAGLSGSTWYMSTLYSHPDFPEKGPQEINEELMKNVSHNPLLLLTPQKVKRYVESLWKKKSSGQPVTFTDIFGMLIGETLIHNRMHTTLSSLKEKVSSAQCPLPLFTCLHVKPDVSELMFADWVEFSPYEIGMAKYGTFMAPDLFGSKFFMGTVVKKYEENPLHFLMGVWGSAFSILFNRVLGVSGSHNKGSTMEEELENITAKHIVSNDSSDSDDESQEPKGTEGEDAEREYQNDHQASWVHRMLMALVSDSALFNTREGRAGKVHNFMLGLNLNTSYPLSPLRDFTQESFDDDELDAAVADPDEFERIYEPLDVKSKKIHVVDSGLTFNLPYPLILRPQRGVDLIISFDFSARPSDTSPPFKELLLAEKWAKMNKLPFPKIDPYVFDREGLKECYVFKPKNPDVEKDCPIIIHFVLANINFRKYKSPGVPRETKEEKEIADFDIFDDPESPFSTFNFQYPNQAFKRLHDLMYFNTLNNIDVIKDAMVESIEYRRQNPSRCSVSLSNVEARRFFNKEFLSKPTA.

Positions 1-178 are phospholipid binding; it reads MSFIDPYQHI…MRKLLGPKKS (178 aa). The residue at position 2 (serine 2) is a Phosphoserine. In terms of domain architecture, C2 spans 6–122; sequence PYQHIIVEHQ…KVGEKKEVPF (117 aa). 7 residues coordinate Ca(2+): aspartate 40, threonine 41, aspartate 43, asparagine 65, aspartate 93, alanine 94, and asparagine 95. The region spanning 138 to 739 is the PLA2c domain; that stretch reads VCSSPDLRFS…SNVEARRFFN (602 aa). The active-site Nucleophile is the serine 228. Residue threonine 268 is modified to Phosphothreonine. The segment at 428–458 is disordered; that stretch reads HIVSNDSSDSDDESQEPKGTEGEDAEREYQN. Phosphoserine occurs at positions 434, 435, and 437. The span at 442-458 shows a compositional bias: basic and acidic residues; sequence QEPKGTEGEDAEREYQN. Residue serine 505 is modified to Phosphoserine; by MAPK. Residue serine 514 is modified to Phosphoserine. A Glycyl lysine isopeptide (Lys-Gly) (interchain with G-Cter in SUMO2) cross-link involves residue lysine 540. Catalysis depends on aspartate 548, which acts as the Proton acceptor. Lysine 605 is covalently cross-linked (Glycyl lysine isopeptide (Lys-Gly) (interchain with G-Cter in SUMO2)). Phosphoserine is present on residues serine 726 and serine 728.

As to quaternary structure, interacts with KAT5. Phosphorylated at both Ser-505 and Ser-726 in response to mitogenic stimuli.

Its subcellular location is the cytoplasm. The protein resides in the golgi apparatus membrane. It is found in the nucleus envelope. The catalysed reaction is a 1,2-diacyl-sn-glycero-3-phosphocholine + H2O = a 1-acyl-sn-glycero-3-phosphocholine + a fatty acid + H(+). It carries out the reaction a 1-O-alkyl-2-acyl-sn-glycero-3-phosphocholine + H2O = a 1-O-alkyl-sn-glycero-3-phosphocholine + a fatty acid + H(+). The enzyme catalyses a 1-acyl-sn-glycero-3-phosphocholine + H2O = sn-glycerol 3-phosphocholine + a fatty acid + H(+). It catalyses the reaction 1-hexadecanoyl-2-(5Z,8Z,11Z,14Z-eicosatetraenoyl)-sn-glycero-3-phosphocholine + H2O = 1-hexadecanoyl-sn-glycero-3-phosphocholine + (5Z,8Z,11Z,14Z)-eicosatetraenoate + H(+). The catalysed reaction is 1,2-di-(5Z,8Z,11Z,14Z-eicosatetraenoyl)-sn-glycero-3-phosphocholine + H2O = 1-(5Z,8Z,11Z,14Z-eicosatetraenoyl)-sn-glycero-3-phosphocholine + (5Z,8Z,11Z,14Z)-eicosatetraenoate + H(+). It carries out the reaction 1-octadecanoyl-2-(5Z,8Z,11Z,14Z-eicosatetraenoyl)-sn-glycero-3-phosphocholine + H2O = 1-octadecanoyl-sn-glycero-3-phosphocholine + (5Z,8Z,11Z,14Z)-eicosatetraenoate + H(+). The enzyme catalyses 1-hexadecanoyl-2-(9Z,12Z-octadecadienoyl)-sn-glycero-3-phosphocholine + H2O = (9Z,12Z)-octadecadienoate + 1-hexadecanoyl-sn-glycero-3-phosphocholine + H(+). It catalyses the reaction 1-octadecanoyl-2-(9Z,12Z,15Z-octadecatrienoyl)-sn-glycero-3-phosphocholine + H2O = (9Z,12Z,15Z)-octadecatrienoate + 1-octadecanoyl-sn-glycero-3-phosphocholine + H(+). The catalysed reaction is 1-(5Z,8Z,11Z,14Z-eicosatetraenoyl)-2-hexadecanoyl-sn-glycero-3-phosphocholine + H2O = 1-(5Z,8Z,11Z,14Z-eicosatetraenoyl)-sn-glycero-3-phosphocholine + hexadecanoate + H(+). It carries out the reaction 1-O-hexadecyl-2-(5Z,8Z,11Z,14Z)-eicosatetraenoyl-sn-glycero-3-phosphocholine + H2O = 1-O-hexadecyl-sn-glycero-3-phosphocholine + (5Z,8Z,11Z,14Z)-eicosatetraenoate + H(+). The enzyme catalyses 1,2-di-(9Z-octadecenoyl)-sn-glycero-3-phospho-(1'-sn-glycerol) + H2O = 1-(9Z-octadecenoyl)-sn-glycero-3-phospho-(1'-sn-glycerol) + (9Z)-octadecenoate + H(+). It catalyses the reaction 1-octadecanoyl-2-(5Z,8Z,11Z,14Z-eicosatetraenoyl)-sn-glycero-3-phosphate + H2O = 1-octadecanoyl-sn-glycero-3-phosphate + (5Z,8Z,11Z,14Z)-eicosatetraenoate + H(+). The catalysed reaction is 1-hexadecanoyl-sn-glycero-3-phosphocholine + H2O = sn-glycerol 3-phosphocholine + hexadecanoate + H(+). It carries out the reaction 2-(prostaglandin E2)-sn-glycero-3-phosphoethanolamine + H2O = sn-glycero-3-phosphoethanolamine + prostaglandin E2 + H(+). The enzyme catalyses 2-[(15S)-hydroxy-(5Z,8Z,11Z,13E)-eicosatetraenoyl]-sn-glycero-3-phosphocholine + H2O = (15S)-hydroxy-(5Z,8Z,11Z,13E)-eicosatetraenoate + sn-glycerol 3-phosphocholine + H(+). It catalyses the reaction 2-[(15R)-hydroxy-(5Z,8Z,11Z,13E)-eicosatetraenoyl]-sn-glycero-3-phosphocholine + H2O = (15R)-hydroxy-(5Z,8Z,11Z,13E)-eicosatetraenoate + sn-glycerol 3-phosphocholine + H(+). The catalysed reaction is 2-(prostaglandin E2)-sn-glycero-3-phosphocholine + H2O = prostaglandin E2 + sn-glycerol 3-phosphocholine + H(+). It carries out the reaction 2-[(11R)-hydroxy-(5Z,8Z,12E,14Z)-eicosatetraenoyl]-sn-glycero-3-phosphocholine + H2O = (11R)-hydroxy-(5Z,8Z,12E,14Z)-eicosatetraenoate + sn-glycerol 3-phosphocholine + H(+). The enzyme catalyses 1-(5Z,8Z,11Z,14Z-eicosatetraenoyl)-2-O-hexadecyl-sn-glycero-3-phosphocholine + H2O = 2-O-hexadecyl-sn-glycero-3-phosphocholine + (5Z,8Z,11Z,14Z)-eicosatetraenoate + H(+). It catalyses the reaction 1-octadecanoyl-2-(5Z,8Z,11Z,14Z-eicosatetraenoyl)-sn-glycero-3-phosphocholine + glycerol = 1-(5Z,8Z,11Z,14Z-eicosatetraenoyl)-glycerol + 1-octadecanoyl-sn-glycero-3-phosphocholine. The catalysed reaction is 1-octadecanoyl-2-(9Z,12Z,15Z-octadecatrienoyl)-sn-glycero-3-phosphocholine + glycerol = 1-(9Z,12Z,15Z-octadecatrienoyl)-glycerol + 1-octadecanoyl-sn-glycero-3-phosphocholine. It participates in membrane lipid metabolism; glycerophospholipid metabolism. It functions in the pathway lipid metabolism; arachidonate metabolism. The protein operates within lipid metabolism; prostaglandin biosynthesis. Its pathway is lipid metabolism; leukotriene B4 biosynthesis. Its activity is regulated as follows. Activated by cytosolic calcium, which is necessary for binding to membrane lipids. Activated by phosphorylation in response to mitogenic stimuli. Functionally, has primarily calcium-dependent phospholipase and lysophospholipase activities, with a major role in membrane lipid remodeling and biosynthesis of lipid mediators of the inflammatory response. Plays an important role in embryo implantation and parturition through its ability to trigger prostanoid production. Preferentially hydrolyzes the ester bond of the fatty acyl group attached at sn-2 position of phospholipids (phospholipase A2 activity). Selectively hydrolyzes sn-2 arachidonoyl group from membrane phospholipids, providing the precursor for eicosanoid biosynthesis via the cyclooxygenase pathway. In an alternative pathway of eicosanoid biosynthesis, hydrolyzes sn-2 fatty acyl chain of eicosanoid lysophopholipids to release free bioactive eicosanoids. Hydrolyzes the ester bond of the fatty acyl group attached at sn-1 position of phospholipids (phospholipase A1 activity) only if an ether linkage rather than an ester linkage is present at the sn-2 position. This hydrolysis is not stereospecific. Has calcium-independent phospholipase A2 and lysophospholipase activities in the presence of phosphoinositides. Has O-acyltransferase activity. Catalyzes the transfer of fatty acyl chains from phospholipids to a primary hydroxyl group of glycerol (sn-1 or sn-3), potentially contributing to monoacylglycerol synthesis. The chain is Cytosolic phospholipase A2 (PLA2G4A) from Oryctolagus cuniculus (Rabbit).